Consider the following 362-residue polypeptide: Serine/threonine-protein kinase SBK2 (362 aa).

A compositionally biased stretch (basic and acidic residues) spans 1-11 (MPGKQSEDKPM). The segment at 1-26 (MPGKQSEDKPMEVSTVEDGGDEGLGG) is disordered. The Protein kinase domain maps to 62–330 (YEEVRPLGQG…IKSYLGQPWK (269 aa)). Residues 68–76 (LGQGRFGRV) and Lys-91 contribute to the ATP site. Residue Asp-183 is the Proton acceptor of the active site. A disordered region spans residues 329–362 (WKQREGEAEELATELREDGWRGGQEAAKGEQPAC).

Belongs to the protein kinase superfamily. Ser/Thr protein kinase family. STKL subfamily.

The enzyme catalyses L-seryl-[protein] + ATP = O-phospho-L-seryl-[protein] + ADP + H(+). It catalyses the reaction L-threonyl-[protein] + ATP = O-phospho-L-threonyl-[protein] + ADP + H(+). This is Serine/threonine-protein kinase SBK2 (Sbk2) from Mus musculus (Mouse).